The primary structure comprises 92 residues: Acyl carrier protein (92 aa).

In terms of domain architecture, Carrier spans 1–84 (MPSTADERQL…QIAAHLAEAV (84 aa)). The residue at position 44 (Ser-44) is an O-(pantetheine 4'-phosphoryl)serine.

Belongs to the acyl carrier protein (ACP) family. In terms of processing, 4'-phosphopantetheine is transferred from CoA to a specific serine of apo-ACP by AcpS. This modification is essential for activity because fatty acids are bound in thioester linkage to the sulfhydryl of the prosthetic group.

It is found in the cytoplasm. It functions in the pathway lipid metabolism; fatty acid biosynthesis. Functionally, carrier of the growing fatty acid chain in fatty acid biosynthesis. This chain is Acyl carrier protein, found in Streptomyces coelicolor (strain ATCC BAA-471 / A3(2) / M145).